Reading from the N-terminus, the 873-residue chain is MHEQYQPLEIETQAQNYWKEHQSFLVRELPDKEKFYCLSMFPYPSGKLHMGHVRNYTIGDVISRYHRMQGRNVLQPMGWDAFGMPAENAAMKNNVAPAAWTYDNIAYMKSQLDSLGLAIDWSREVTTCKPDYYRWEQWLFTRLFEKGVIYRKNGTVNWDPVDQTVLANEQVIDGRGWRSGALIEKREIPMYYFKITAYAEELLESLDNLPGWPEQVKTMQRNWIGKSRGMEIGFPYDQASIGHAGQLKVFTTRPDTLMGATYVAVAAEHPLATQAAQNDPQLQAFIDECKRGGVAEADIATQEKKGMATSLFVEHPLTGDKLPVWVANYVLMNYGEGAVMAVPGHDERDFEFANKYGLPIRQVIAKVEGDNDFESSVWKEWYGAKDESVLTVNSGKYDNLGYQAAFDAIGADLEAKGLGQARTQFRLRDWGISRQRYWGCPIPIIHCEACGDVPVPADQLPVVLPEDVVPDGSGSPLAKMPEFYECNCPKCGQPAKRETDTMDTFVESSWYFARYACPQFEGGMLDRKAADYWLPVDQYIGGIEHAILHLLYARFFHKLMRDEGLVGSDEPFKNLLTQGMVVADTYYRTTANGGKDWFNPADVEVERDAKAKVVGARLKSDGQPVEIGGTEKMSKSKNNGVDPQSMIDQYGADTCRLFMMFASPPDMSLEWSDAGVEGANRFLRRVWRLAHAHVSAGLPGALDVAALSDAQKQVRRAIHLAIRQASQDVGQHHKFNTAIAAVMTLMNVLEKAPNQDAQDRALIQEGLETVVLLLAPITPHICHVLWGQLGHAEAVIDARWPSVDESALVQDTLQLVVQVNGKLRGHIDVAASASREDVEAAARANENVLRFTEGLSIRKVIVVPGKLVNIVAN.

Residues 42–52 (PYPSGKLHMGH) carry the 'HIGH' region motif. Residues 624 to 643 (PVEIGGTEKMSKSKNNGVDP) are disordered. The short motif at 632–636 (KMSKS) is the 'KMSKS' region element. An ATP-binding site is contributed by Lys-635.

It belongs to the class-I aminoacyl-tRNA synthetase family.

Its subcellular location is the cytoplasm. It carries out the reaction tRNA(Leu) + L-leucine + ATP = L-leucyl-tRNA(Leu) + AMP + diphosphate. The polypeptide is Leucine--tRNA ligase (Pseudomonas aeruginosa (strain ATCC 15692 / DSM 22644 / CIP 104116 / JCM 14847 / LMG 12228 / 1C / PRS 101 / PAO1)).